A 396-amino-acid polypeptide reads, in one-letter code: NADH-quinone oxidoreductase subunit D (396 aa).

Belongs to the complex I 49 kDa subunit family. In terms of assembly, NDH-1 is composed of 14 different subunits. Subunits NuoB, C, D, E, F, and G constitute the peripheral sector of the complex.

The protein localises to the cell inner membrane. It catalyses the reaction a quinone + NADH + 5 H(+)(in) = a quinol + NAD(+) + 4 H(+)(out). NDH-1 shuttles electrons from NADH, via FMN and iron-sulfur (Fe-S) centers, to quinones in the respiratory chain. The immediate electron acceptor for the enzyme in this species is believed to be ubiquinone. Couples the redox reaction to proton translocation (for every two electrons transferred, four hydrogen ions are translocated across the cytoplasmic membrane), and thus conserves the redox energy in a proton gradient. The protein is NADH-quinone oxidoreductase subunit D of Orientia tsutsugamushi (strain Boryong) (Rickettsia tsutsugamushi).